The sequence spans 198 residues: Lipid A 4'-phosphatase (198 aa).

A helical membrane pass occupies residues 143 to 165; it reads AGQHTILQVTIGSLIAWGFAYLF.

This sequence belongs to the lipid A LpxF 4'-phosphatase family.

It is found in the cell inner membrane. It functions in the pathway bacterial outer membrane biogenesis; LPS lipid A biosynthesis. Its function is as follows. Removes the 4'-phosphate group from tetra- and hexaacylated lipid A species, has no 1-phosphatase or Kdo hydrolase activity. Absence of the 4'-phosphate group renders the bacteria resistant to host-derived cationic antimicrobial peptides (CAMP), allowing it to camouflage itself from the host innate immune response, and plays a critical role in the long-term colonization of the host's stomach. The polypeptide is Lipid A 4'-phosphatase (Helicobacter pylori (strain J99 / ATCC 700824) (Campylobacter pylori J99)).